Consider the following 470-residue polypeptide: Outer capsid protein sigma-1 (470 aa).

The tract at residues Met-1–Val-324 is tail. N-linked (GlcNAc...) asparagine; by host glycosylation is present at Asn-21. A coiled-coil region spans residues Lys-26–Asn-46. Residues Asn-121, Asn-205, and Asn-353 are each glycosylated (N-linked (GlcNAc...) asparagine; by host). The interval Gln-325–Arg-470 is head.

It belongs to the orthoreovirus sigma-1 protein family. As to quaternary structure, homotrimer. Interacts (via the head region) with human F11R. Undergoes dramatic conformational rearrangements during viral disassembly in the endocytic pathway.

It localises to the virion. Its function is as follows. Fiber-like molecule that attaches the virion to the host cell membrane by binding to the primary receptor F11R/JAM-A and to sialic acid containing proteins (coreceptor). The interaction of sigma-1 with F11R is required for NF-kB activation and apoptosis. Binding to both sialic acid and F11R is required to induce maximal levels of apoptosis. The protein is Outer capsid protein sigma-1 (S1) of Reovirus type 1 (strain Lang) (T1L).